The primary structure comprises 152 residues: 1,4-dihydroxy-2-naphthoyl-CoA hydrolase (152 aa).

D20 is an active-site residue.

This sequence belongs to the 4-hydroxybenzoyl-CoA thioesterase family. DHNA-CoA hydrolase subfamily.

It catalyses the reaction 1,4-dihydroxy-2-naphthoyl-CoA + H2O = 1,4-dihydroxy-2-naphthoate + CoA + H(+). It participates in cofactor biosynthesis; phylloquinone biosynthesis. The protein operates within quinol/quinone metabolism; 1,4-dihydroxy-2-naphthoate biosynthesis; 1,4-dihydroxy-2-naphthoate from chorismate: step 7/7. Its function is as follows. Catalyzes the hydrolysis of 1,4-dihydroxy-2-naphthoyl-CoA (DHNA-CoA) to 1,4-dihydroxy-2-naphthoate (DHNA), a reaction involved in phylloquinone (vitamin K1) biosynthesis. The sequence is that of 1,4-dihydroxy-2-naphthoyl-CoA hydrolase from Synechococcus sp. (strain CC9311).